A 193-amino-acid polypeptide reads, in one-letter code: uncharacterized protein (193 aa).

This is an uncharacterized protein from Haemophilus influenzae (strain ATCC 51907 / DSM 11121 / KW20 / Rd).